Consider the following 486-residue polypeptide: Ribosomal RNA small subunit methyltransferase F (486 aa).

Residues Ala124–Lys130, Glu148, Asp175, and Asp193 each bind S-adenosyl-L-methionine. Catalysis depends on Cys246, which acts as the Nucleophile.

The protein belongs to the class I-like SAM-binding methyltransferase superfamily. RsmB/NOP family.

It localises to the cytoplasm. It catalyses the reaction cytidine(1407) in 16S rRNA + S-adenosyl-L-methionine = 5-methylcytidine(1407) in 16S rRNA + S-adenosyl-L-homocysteine + H(+). Functionally, specifically methylates the cytosine at position 1407 (m5C1407) of 16S rRNA. This Shewanella baltica (strain OS195) protein is Ribosomal RNA small subunit methyltransferase F.